Reading from the N-terminus, the 875-residue chain is Alanine--tRNA ligase (875 aa).

Zn(2+)-binding residues include His564, His568, Cys666, and His670.

It belongs to the class-II aminoacyl-tRNA synthetase family. Homotetramer. Zn(2+) is required as a cofactor.

The protein localises to the cytoplasm. The enzyme catalyses tRNA(Ala) + L-alanine + ATP = L-alanyl-tRNA(Ala) + AMP + diphosphate. In terms of biological role, catalyzes the attachment of alanine to tRNA(Ala) in a two-step reaction: alanine is first activated by ATP to form Ala-AMP and then transferred to the acceptor end of tRNA(Ala). Also edits incorrectly charged Ser-tRNA(Ala) and Gly-tRNA(Ala) via its editing domain. The polypeptide is Alanine--tRNA ligase (Serratia proteamaculans (strain 568)).